Here is a 109-residue protein sequence, read N- to C-terminus: U4-lycotoxin-Ls1a (109 aa).

An N-terminal signal peptide occupies residues 1-22; sequence MKVLVLFSVLFLTLFSYSSTEA. A propeptide spanning residues 23 to 44 is cleaved from the precursor; that stretch reads IDELDSDAEEDMLSLMANEQVR. The knottin domain stretch occupies residues 45-88; the sequence is AKACTPRLHDCSHDRHSCCRGELFKDVCYCFYPEGEDKTEVCSC. 4 cysteine pairs are disulfide-bonded: cysteine 48-cysteine 63, cysteine 55-cysteine 72, cysteine 62-cysteine 88, and cysteine 74-cysteine 86. Positions 89–108 are linear cationic cytotoxin domain; it reads QQPKSHKYIEKVVDKAKTVV.

This sequence belongs to the neurotoxin 19 (CSTX) family. 05 (U4-Lctx) subfamily. Expressed by the venom gland.

The protein localises to the secreted. Functionally, enhances the high-affinity desensitization of human P2RX3 purinoceptors. In Lycosa singoriensis (Wolf spider), this protein is U4-lycotoxin-Ls1a.